Here is a 407-residue protein sequence, read N- to C-terminus: 1-deoxy-D-xylulose 5-phosphate reductoisomerase (407 aa).

The NADPH site is built by threonine 25, glycine 26, serine 27, isoleucine 28, asparagine 53, and asparagine 136. Lysine 137 serves as a coordination point for 1-deoxy-D-xylulose 5-phosphate. Glutamate 138 provides a ligand contact to NADPH. Residue aspartate 162 participates in Mn(2+) binding. 1-deoxy-D-xylulose 5-phosphate is bound by residues serine 163, glutamate 164, serine 188, and histidine 211. A Mn(2+)-binding site is contributed by glutamate 164. Position 217 (glycine 217) interacts with NADPH. 1-deoxy-D-xylulose 5-phosphate is bound by residues serine 224, asparagine 229, lysine 230, and glutamate 233. Mn(2+) is bound at residue glutamate 233.

Belongs to the DXR family. The cofactor is Mg(2+). It depends on Mn(2+) as a cofactor.

The enzyme catalyses 2-C-methyl-D-erythritol 4-phosphate + NADP(+) = 1-deoxy-D-xylulose 5-phosphate + NADPH + H(+). Its pathway is isoprenoid biosynthesis; isopentenyl diphosphate biosynthesis via DXP pathway; isopentenyl diphosphate from 1-deoxy-D-xylulose 5-phosphate: step 1/6. Its function is as follows. Catalyzes the NADPH-dependent rearrangement and reduction of 1-deoxy-D-xylulose-5-phosphate (DXP) to 2-C-methyl-D-erythritol 4-phosphate (MEP). The sequence is that of 1-deoxy-D-xylulose 5-phosphate reductoisomerase from Nitrobacter winogradskyi (strain ATCC 25391 / DSM 10237 / CIP 104748 / NCIMB 11846 / Nb-255).